Here is a 610-residue protein sequence, read N- to C-terminus: Glutamine--fructose-6-phosphate aminotransferase [isomerizing] (610 aa).

C2 serves as the catalytic Nucleophile; for GATase activity. Positions 2-219 (CGIVGYAGKK…SGEWGYFSQN (218 aa)) constitute a Glutamine amidotransferase type-2 domain. 2 consecutive SIS domains span residues 287 to 431 (SKDV…SDEE) and 459 to 600 (MSSH…PDQP). K605 (for Fru-6P isomerization activity) is an active-site residue.

In terms of assembly, homodimer.

The protein resides in the cytoplasm. It catalyses the reaction D-fructose 6-phosphate + L-glutamine = D-glucosamine 6-phosphate + L-glutamate. Functionally, catalyzes the first step in hexosamine metabolism, converting fructose-6P into glucosamine-6P using glutamine as a nitrogen source. The sequence is that of Glutamine--fructose-6-phosphate aminotransferase [isomerizing] from Leptospira interrogans serogroup Icterohaemorrhagiae serovar copenhageni (strain Fiocruz L1-130).